The following is a 568-amino-acid chain: Proline--tRNA ligase (568 aa).

It belongs to the class-II aminoacyl-tRNA synthetase family. ProS type 1 subfamily. In terms of assembly, homodimer.

Its subcellular location is the cytoplasm. It carries out the reaction tRNA(Pro) + L-proline + ATP = L-prolyl-tRNA(Pro) + AMP + diphosphate. Functionally, catalyzes the attachment of proline to tRNA(Pro) in a two-step reaction: proline is first activated by ATP to form Pro-AMP and then transferred to the acceptor end of tRNA(Pro). As ProRS can inadvertently accommodate and process non-cognate amino acids such as alanine and cysteine, to avoid such errors it has two additional distinct editing activities against alanine. One activity is designated as 'pretransfer' editing and involves the tRNA(Pro)-independent hydrolysis of activated Ala-AMP. The other activity is designated 'posttransfer' editing and involves deacylation of mischarged Ala-tRNA(Pro). The misacylated Cys-tRNA(Pro) is not edited by ProRS. The polypeptide is Proline--tRNA ligase (Chromobacterium violaceum (strain ATCC 12472 / DSM 30191 / JCM 1249 / CCUG 213 / NBRC 12614 / NCIMB 9131 / NCTC 9757 / MK)).